A 536-amino-acid chain; its full sequence is Arylsulfatase K (536 aa).

An N-terminal signal peptide occupies residues 1 to 24 (MIQKCIALSLFLFSALPEDNIVRA). Residues aspartate 42 and cysteine 82 each contribute to the Ca(2+) site. The active-site Nucleophile is cysteine 82. At cysteine 82 the chain carries 3-oxoalanine (Cys). Residue lysine 130 coordinates substrate. Asparagine 195 carries N-linked (GlcNAc...) asparagine glycosylation. Residue histidine 253 participates in substrate binding. A glycan (N-linked (GlcNAc...) asparagine) is linked at asparagine 264. 2 residues coordinate Ca(2+): aspartate 315 and histidine 316. Residues asparagine 377, asparagine 416, and asparagine 501 are each glycosylated (N-linked (GlcNAc...) asparagine).

It belongs to the sulfatase family. It depends on Ca(2+) as a cofactor. Post-translationally, the conversion to 3-oxoalanine (also known as C-formylglycine, FGly), of a serine or cysteine residue in prokaryotes and of a cysteine residue in eukaryotes, is critical for catalytic activity.

The protein resides in the secreted. It is found in the lysosome. It catalyses the reaction an aryl sulfate + H2O = a phenol + sulfate + H(+). The catalysed reaction is Hydrolysis of the 2-sulfate groups of the 2-O-sulfo-D-glucuronate residues of chondroitin sulfate, heparin and heparitin sulfate.. Its function is as follows. Catalyzes the hydrolysis of pseudosubstrates such as p-nitrocatechol sulfate and p-nitrophenyl sulfate. Catalyzes the hydrolysis of the 2-sulfate groups of the 2-O-sulfo-D-glucuronate residues of chondroitin sulfate, heparin and heparitin sulfate. Acts selectively on 2-sulfoglucuronate and lacks activity against 2-sulfoiduronate. The polypeptide is Arylsulfatase K (arsk) (Xenopus laevis (African clawed frog)).